We begin with the raw amino-acid sequence, 224 residues long: Type VII secretion system protein EsaE (224 aa).

Interacts with EssD.

Its function is as follows. Component of the type VII secretion system (Ess). Plays a role in Esx protein secretion. Plays an essential role in the processing and secretion of EssD. This chain is Type VII secretion system protein EsaE, found in Staphylococcus aureus (strain USA300).